We begin with the raw amino-acid sequence, 646 residues long: Epithelial sodium channel subunit beta-2 (646 aa).

Residues 1 to 57 are Cytoplasmic-facing; it reads MIQGKLKRLKRYFTRALHRIQKGPGYTYKELLVWFCDNTNTHGPKRIIKEGPKKRVM. The helical transmembrane segment at 58-78 threads the bilayer; that stretch reads WFILTLVFAGLVFWQWGLLIL. The Extracellular portion of the chain corresponds to 79–551; the sequence is TYLSYGVSVS…GGQFGFWMGG (473 aa). 8 cysteine pairs are disulfide-bonded: C104-C290, C214-C221, C267-C274, C380-C467, C405-C463, C409-C459, C418-C445, and C420-C434. The chain crosses the membrane as a helical span at residues 552–572; the sequence is SVLCIIEFGEIIIDCMWITIL. The Cytoplasmic portion of the chain corresponds to 573 to 646; the sequence is KLLAWIRNRR…IEPVSSDEEN (74 aa). Residues 586-646 form a disordered region; it reads QRPQYADPPP…IEPVSSDEEN (61 aa). Over residues 610 to 619 the composition is skewed to basic and acidic residues; sequence QHDDGNHVTE.

The protein belongs to the amiloride-sensitive sodium channel (TC 1.A.6) family. SCNN1B subfamily. In terms of assembly, component of the heterotrimeric epithelial sodium channel (ENaC) composed of an alpha/SCNN1A, a beta/SCNN1B and a gamma/SCNN1G subunit.

It is found in the apical cell membrane. The protein resides in the cytoplasmic vesicle membrane. It catalyses the reaction Na(+)(in) = Na(+)(out). Originally identified and characterized by its inhibition by the diuretic drug amiloride. Functionally, this is one of the three pore-forming subunits of the heterotrimeric epithelial sodium channel (ENaC), a critical regulator of sodium balance and fluid homeostasis. ENaC operates in epithelial tissues, where it mediates the electrodiffusion of sodium ions from extracellular fluid through the apical membrane of cells, with water following osmotically. The polypeptide is Epithelial sodium channel subunit beta-2 (scnn1b-b) (Xenopus laevis (African clawed frog)).